The chain runs to 421 residues: ATP-dependent RNA helicase RhlB (421 aa).

The Q motif signature appears at 9–37; sequence QKFSDFALHPKVVEALEKKGFHNCTPIQA. In terms of domain architecture, Helicase ATP-binding spans 40–219; sequence LPLTLAGRDV…FEQMNNAEYI (180 aa). 53 to 60 lines the ATP pocket; that stretch reads AQTGTGKT. A DEAD box motif is present at residues 165-168; it reads DEAD. One can recognise a Helicase C-terminal domain in the interval 245–390; it reads RLLQTLIEEE…VSKYNPDALM (146 aa). Residues 392-421 form a disordered region; it reads DLPKPLRLTRPRTGNGPRRTGAPRNRRRSG. A compositionally biased stretch (low complexity) spans 402–414; that stretch reads PRTGNGPRRTGAP.

This sequence belongs to the DEAD box helicase family. RhlB subfamily. In terms of assembly, component of the RNA degradosome, which is a multiprotein complex involved in RNA processing and mRNA degradation.

Its subcellular location is the cytoplasm. The catalysed reaction is ATP + H2O = ADP + phosphate + H(+). Its function is as follows. DEAD-box RNA helicase involved in RNA degradation. Has RNA-dependent ATPase activity and unwinds double-stranded RNA. The sequence is that of ATP-dependent RNA helicase RhlB from Escherichia coli O157:H7.